A 1220-amino-acid chain; its full sequence is DNA-directed RNA polymerase subunit beta' (1220 aa).

C60, C62, C75, and C78 together coordinate Zn(2+). Residues D449, D451, and D453 each coordinate Mg(2+). Residues C818, C892, C899, and C902 each contribute to the Zn(2+) site.

This sequence belongs to the RNA polymerase beta' chain family. In terms of assembly, the RNAP catalytic core consists of 2 alpha, 1 beta, 1 beta' and 1 omega subunit. When a sigma factor is associated with the core the holoenzyme is formed, which can initiate transcription. The cofactor is Mg(2+). Zn(2+) is required as a cofactor.

It catalyses the reaction RNA(n) + a ribonucleoside 5'-triphosphate = RNA(n+1) + diphosphate. Functionally, DNA-dependent RNA polymerase catalyzes the transcription of DNA into RNA using the four ribonucleoside triphosphates as substrates. This chain is DNA-directed RNA polymerase subunit beta', found in Lacticaseibacillus casei (strain BL23) (Lactobacillus casei).